A 382-amino-acid polypeptide reads, in one-letter code: Small ribosomal subunit protein bS1 homolog (382 aa).

S1 motif domains are found at residues 16–84, 102–167, 188–256, and 273–342; these read GDVV…LSKR, KEVF…LSHR, GSVL…LSIK, and GDVL…LSMR. A Phosphoserine modification is found at Ser-243.

The protein belongs to the bacterial ribosomal protein bS1 family.

Its function is as follows. Plays a role in sporulation. Cannot be expressed in wild-type E.coli, does not complement an E.coli rpsA deletion. This Bacillus subtilis (strain 168) protein is Small ribosomal subunit protein bS1 homolog.